Consider the following 916-residue polypeptide: RNA-directed DNA polymerase from mobile element jockey (916 aa).

Positions 483–757 (SILRVGYFPK…HEYKYLGVIL (275 aa)) constitute a Reverse transcriptase domain. Residues 890-916 (RSASPRSRVRRRLKRHHPQDLLDRALT) form a disordered region. A compositionally biased stretch (basic residues) spans 896 to 906 (SRVRRRLKRHH). The span at 907–916 (PQDLLDRALT) shows a compositional bias: basic and acidic residues.

Mg(2+) is required as a cofactor. It depends on Mn(2+) as a cofactor.

It catalyses the reaction DNA(n) + a 2'-deoxyribonucleoside 5'-triphosphate = DNA(n+1) + diphosphate. With respect to regulation, inactivated by sulphydryl reagent. In Drosophila funebris (Fruit fly), this protein is RNA-directed DNA polymerase from mobile element jockey (jockey\pol).